Consider the following 555-residue polypeptide: Connector enhancer of kinase suppressor of ras 3 (555 aa).

The SAM domain occupies W7–L72. Residues N80–A174 enclose the CRIC domain. The PDZ domain occupies E211–P293. Disordered stretches follow at residues R308–S333, P348–E391, and P518–G538. Residues P311–T329 are compositionally biased toward low complexity. In terms of domain architecture, DUF1170 spans S325–W546. Phosphoserine occurs at positions 381 and 383.

Belongs to the CNKSR family. In terms of assembly, interacts with epithelial sodium channel ENaC. Interacts directly with SCNN1A (ENaC subunit alpha) and SCNN1B (ENaC subunit beta) C-terminal tails. Interacts with ENaC regulatory proteins NEDD4L, RAF1 and SGK1.

Its subcellular location is the cytoplasm. The protein localises to the apical cell membrane. In terms of biological role, involved in transepithelial sodium transport. Regulates aldosterone-induced and epithelial sodium channel (ENaC)-mediated sodium transport through regulation of ENaC cell surface expression. Acts as a scaffold protein coordinating the assembly of an ENaC-regulatory complex (ERC). This chain is Connector enhancer of kinase suppressor of ras 3 (Cnksr3), found in Rattus norvegicus (Rat).